Here is a 1215-residue protein sequence, read N- to C-terminus: DNA-directed RNA polymerase subunit beta' (1215 aa).

Zn(2+) contacts are provided by Cys-60, Cys-62, Cys-75, and Cys-78. Mg(2+) contacts are provided by Asp-450, Asp-452, and Asp-454. Zn(2+) is bound by residues Cys-818, Cys-892, Cys-899, and Cys-902.

The protein belongs to the RNA polymerase beta' chain family. The RNAP catalytic core consists of 2 alpha, 1 beta, 1 beta' and 1 omega subunit. When a sigma factor is associated with the core the holoenzyme is formed, which can initiate transcription. The cofactor is Mg(2+). Zn(2+) serves as cofactor.

The enzyme catalyses RNA(n) + a ribonucleoside 5'-triphosphate = RNA(n+1) + diphosphate. DNA-dependent RNA polymerase catalyzes the transcription of DNA into RNA using the four ribonucleoside triphosphates as substrates. The chain is DNA-directed RNA polymerase subunit beta' from Streptococcus suis (strain 98HAH33).